A 337-amino-acid polypeptide reads, in one-letter code: Sorting nexin-15 (337 aa).

The PX domain occupies 1–130; that stretch reads MSRQAKDDFL…EFFRGGEVTR (130 aa). A 1,2-diacyl-sn-glycero-3-phospho-(1D-myo-inositol-3-phosphate) is bound by residues Arg51, Ser53, Arg87, and Arg96. An Omega-N-methylarginine modification is found at Arg105. Residues 133–156 are disordered; that stretch reads EVSRDLRILPPPLIPTPPPDEARL. Positions 141–151 are enriched in pro residues; sequence LPPPLIPTPPP. Phosphoserine is present on residues Ser201 and Ser227. Residues 244 to 270 form a disordered region; that stretch reads LDQEPWEPGGQEEEEAEDGEPAPAYLG. A compositionally biased stretch (acidic residues) spans 253 to 263; the sequence is GQEEEEAEDGE. In terms of domain architecture, MIT spans 265–337; sequence APAYLGQATE…RAEMLHTHLP (73 aa).

This sequence belongs to the sorting nexin family. In terms of assembly, homodimer. Interacts with SNX1, SNX2 and SNX4.

The protein localises to the cytoplasm. It localises to the membrane. The protein resides in the cytoplasmic vesicle membrane. Functionally, may be involved in several stages of intracellular trafficking. Overexpression of SNX15 disrupts the normal trafficking of proteins from the plasma membrane to recycling endosomes or the TGN. This is Sorting nexin-15 (Snx15) from Mus musculus (Mouse).